Reading from the N-terminus, the 483-residue chain is UDP-N-acetylmuramate--L-alanine ligase (483 aa).

125 to 131 contributes to the ATP binding site; sequence GTHGKTT.

This sequence belongs to the MurCDEF family.

It localises to the cytoplasm. The enzyme catalyses UDP-N-acetyl-alpha-D-muramate + L-alanine + ATP = UDP-N-acetyl-alpha-D-muramoyl-L-alanine + ADP + phosphate + H(+). It participates in cell wall biogenesis; peptidoglycan biosynthesis. Functionally, cell wall formation. The chain is UDP-N-acetylmuramate--L-alanine ligase from Pseudoalteromonas translucida (strain TAC 125).